Reading from the N-terminus, the 137-residue chain is Acidic phospholipase A2 1 (137 aa).

A signal peptide spans 1-11 (LVAVCVSLLGA). A propeptide spanning residues 12 to 19 (ANIPPQPL) is cleaved from the precursor. 7 cysteine pairs are disulfide-bonded: C30-C89, C44-C136, C46-C62, C61-C117, C68-C110, C78-C103, and C96-C108. Residues Y45, G47, and G49 each contribute to the Ca(2+) site. Residues G49 and H65 each coordinate tridecanoate. H65 is an active-site residue. Residue D66 coordinates Ca(2+). The active site involves D111.

In terms of assembly, monomer. The cofactor is Ca(2+). In terms of tissue distribution, expressed by the venom gland.

Its subcellular location is the secreted. It carries out the reaction a 1,2-diacyl-sn-glycero-3-phosphocholine + H2O = a 1-acyl-sn-glycero-3-phosphocholine + a fatty acid + H(+). Functionally, snake venom phospholipase A2 (PLA2) that shows anticoagulant and neurotoxic activities. PLA2 catalyzes the calcium-dependent hydrolysis of the 2-acyl groups in 3-sn-phosphoglycerides. The sequence is that of Acidic phospholipase A2 1 from Bungarus caeruleus (Indian krait).